Reading from the N-terminus, the 190-residue chain is GTP cyclohydrolase 1 (190 aa).

Residues C75, H78, and C146 each contribute to the Zn(2+) site.

It belongs to the GTP cyclohydrolase I family. As to quaternary structure, homomer.

It catalyses the reaction GTP + H2O = 7,8-dihydroneopterin 3'-triphosphate + formate + H(+). Its pathway is cofactor biosynthesis; 7,8-dihydroneopterin triphosphate biosynthesis; 7,8-dihydroneopterin triphosphate from GTP: step 1/1. The protein is GTP cyclohydrolase 1 of Campylobacter lari (strain RM2100 / D67 / ATCC BAA-1060).